A 228-amino-acid chain; its full sequence is 5'-methylthioadenosine/S-adenosylhomocysteine nucleosidase (228 aa).

Glu-11 functions as the Proton acceptor in the catalytic mechanism. Substrate is bound by residues Gly-77, Ile-151, and 172 to 173; that span reads ME. The active-site Proton donor is Asp-196.

This sequence belongs to the PNP/UDP phosphorylase family. MtnN subfamily.

It catalyses the reaction S-adenosyl-L-homocysteine + H2O = S-(5-deoxy-D-ribos-5-yl)-L-homocysteine + adenine. The enzyme catalyses S-methyl-5'-thioadenosine + H2O = 5-(methylsulfanyl)-D-ribose + adenine. The catalysed reaction is 5'-deoxyadenosine + H2O = 5-deoxy-D-ribose + adenine. It participates in amino-acid biosynthesis; L-methionine biosynthesis via salvage pathway; S-methyl-5-thio-alpha-D-ribose 1-phosphate from S-methyl-5'-thioadenosine (hydrolase route): step 1/2. Functionally, catalyzes the irreversible cleavage of the glycosidic bond in both 5'-methylthioadenosine (MTA) and S-adenosylhomocysteine (SAH/AdoHcy) to adenine and the corresponding thioribose, 5'-methylthioribose and S-ribosylhomocysteine, respectively. Also cleaves 5'-deoxyadenosine, a toxic by-product of radical S-adenosylmethionine (SAM) enzymes, into 5-deoxyribose and adenine. The protein is 5'-methylthioadenosine/S-adenosylhomocysteine nucleosidase of Staphylococcus aureus (strain bovine RF122 / ET3-1).